Here is a 618-residue protein sequence, read N- to C-terminus: Glucose starvation modulator protein 1 (618 aa).

Positions 20–48 form a DNA-binding region, zn(2)-C6 fungal-type; it reads CEFCHTKHIQCDVGRPCQNCLKRNIGKFC. The interval 325–352 is disordered; sequence ANANTHPSHNAKLESECDSSSHSDADLE. The span at 335–352 shows a compositional bias: basic and acidic residues; the sequence is AKLESECDSSSHSDADLE. In terms of domain architecture, PAS spans 466-538; it reads LLDLENMAKL…QIFNELLAFG (73 aa).

The protein belongs to the ERT1/acuK family.

It is found in the nucleus. Transcription factor which regulates nonfermentable carbon utilization. Binds specifically to 5'-CGGN(8)CGG-3' and 5'-CGGN(9)CGG-3' sequences in the promoter region. This is Glucose starvation modulator protein 1 (GSM1) from Saccharomyces cerevisiae (strain YJM789) (Baker's yeast).